A 493-amino-acid polypeptide reads, in one-letter code: Cobyric acid synthase (493 aa).

The GATase cobBQ-type domain maps to 246-440; it reads PIDIAVIKMP…IHGVFDGVVF (195 aa). Catalysis depends on Cys326, which acts as the Nucleophile. The active site involves His432.

This sequence belongs to the CobB/CobQ family. CobQ subfamily.

The protein operates within cofactor biosynthesis; adenosylcobalamin biosynthesis. Its function is as follows. Catalyzes amidations at positions B, D, E, and G on adenosylcobyrinic A,C-diamide. NH(2) groups are provided by glutamine, and one molecule of ATP is hydrogenolyzed for each amidation. The sequence is that of Cobyric acid synthase from Clostridium botulinum (strain Kyoto / Type A2).